A 509-amino-acid polypeptide reads, in one-letter code: Tyrosine-protein kinase STK (509 aa).

The span at 1–16 (MGPCCSKQTKALNNQP) shows a compositional bias: polar residues. The disordered stretch occupies residues 1–23 (MGPCCSKQTKALNNQPDKSKSKD). Glycine 2 carries N-myristoyl glycine lipidation. The SH3 domain occupies 59 to 120 (PGVTIFVALY…PSTYVAPEKS (62 aa)). The 93-residue stretch at 126–218 (WYFGDVKRAE…GLVCALTLPC (93 aa)) folds into the SH2 domain. The Protein kinase domain occupies 240-495 (LRLNRKLGAG…LQGVLEDYFV (256 aa)). Residues 246–254 (LGAGQFGEV) and lysine 268 contribute to the ATP site. Catalysis depends on aspartate 360, which acts as the Proton acceptor. A Phosphotyrosine; by autocatalysis modification is found at tyrosine 390.

It belongs to the protein kinase superfamily. Tyr protein kinase family. SRC subfamily.

The catalysed reaction is L-tyrosyl-[protein] + ATP = O-phospho-L-tyrosyl-[protein] + ADP + H(+). The polypeptide is Tyrosine-protein kinase STK (STK) (Hydra vulgaris (Hydra)).